The following is a 130-amino-acid chain: C-type natriuretic peptide 2 (130 aa).

The signal sequence occupies residues 1–22 (MAASSSSFVPLVLLFLAIPVEP). The propeptide occupies 23-103 (RPSMTRDEAQ…LQQQSKTTRR (81 aa)). The interval 57 to 77 (ELLPRRPGPPRSFGASPGALR) is disordered. The cysteines at positions 114 and 130 are disulfide-linked.

Belongs to the natriuretic peptide family.

The protein localises to the secreted. Functionally, exhibits natriuretic and vasodepressant activity. Has cGMP-stimulating activity. May help to regulate body fluid homeostasis in a variety of aquatic environments. In Takifugu rubripes (Japanese pufferfish), this protein is C-type natriuretic peptide 2.